Here is a 265-residue protein sequence, read N- to C-terminus: MIKWPWKAQEITQNEDWPWDDALAIPLLVNLTAQEQARLIALAERFLQQKRLVALQGFELDSLKSARIALIFCLPILELGIEWLDGFHEVLIYPAPFVVDDEWEDDIGLVHSQRVVQSGQSWQQGPIILNWLDIQDSFDASGFNLIIHEVAHKLDMRNGDRASGIPFIPLRDVAGWEHDLHAAMNNIQDEIDLVGESAASIDAYAATDPAECFAVLSEYFFSAPELFAPRFPALWQRFCQFYRQDPSQRLRVSADEGDYGEESEH.

H111, H148, H152, and E211 together coordinate Zn(2+).

Belongs to the MtfA family. In terms of assembly, interacts with Mlc. Requires Zn(2+) as cofactor.

It is found in the cytoplasm. Its function is as follows. Involved in the modulation of the activity of the glucose-phosphotransferase system (glucose-PTS). Interacts with the transcriptional repressor Mlc, preventing its interaction with DNA and leading to the modulation of expression of genes regulated by Mlc, including ptsG, which encodes the PTS system glucose-specific EIICB component. Shows zinc-dependent metallopeptidase activity. The sequence is that of Mlc titration factor A from Salmonella paratyphi A (strain AKU_12601).